A 457-amino-acid chain; its full sequence is Bifunctional protein GlmU (457 aa).

The segment at 1–229 (MSNSAKSVVI…HSEMEGVNNR (229 aa)) is pyrophosphorylase. Residues 11–14 (LAAG), Lys25, Gln76, 81–82 (GT), 103–105 (YGD), Gly140, Glu154, Asn169, and Asn227 contribute to the UDP-N-acetyl-alpha-D-glucosamine site. Asp105 lines the Mg(2+) pocket. Asn227 contributes to the Mg(2+) binding site. Residues 230–250 (LQLAALERIYQTEQAERLLLE) are linker. Residues 251 to 457 (GVMLLDPARF…GWKRPVKKKQ (207 aa)) are N-acetyltransferase. Positions 333 and 351 each coordinate UDP-N-acetyl-alpha-D-glucosamine. His363 serves as the catalytic Proton acceptor. UDP-N-acetyl-alpha-D-glucosamine is bound by residues Tyr366 and Asn377. Acetyl-CoA is bound by residues Ala380, 386 to 387 (NY), Ser405, Ala423, and Arg440.

It in the N-terminal section; belongs to the N-acetylglucosamine-1-phosphate uridyltransferase family. The protein in the C-terminal section; belongs to the transferase hexapeptide repeat family. Homotrimer. Requires Mg(2+) as cofactor.

The protein resides in the cytoplasm. The catalysed reaction is alpha-D-glucosamine 1-phosphate + acetyl-CoA = N-acetyl-alpha-D-glucosamine 1-phosphate + CoA + H(+). It catalyses the reaction N-acetyl-alpha-D-glucosamine 1-phosphate + UTP + H(+) = UDP-N-acetyl-alpha-D-glucosamine + diphosphate. It participates in nucleotide-sugar biosynthesis; UDP-N-acetyl-alpha-D-glucosamine biosynthesis; N-acetyl-alpha-D-glucosamine 1-phosphate from alpha-D-glucosamine 6-phosphate (route II): step 2/2. Its pathway is nucleotide-sugar biosynthesis; UDP-N-acetyl-alpha-D-glucosamine biosynthesis; UDP-N-acetyl-alpha-D-glucosamine from N-acetyl-alpha-D-glucosamine 1-phosphate: step 1/1. It functions in the pathway bacterial outer membrane biogenesis; LPS lipid A biosynthesis. Catalyzes the last two sequential reactions in the de novo biosynthetic pathway for UDP-N-acetylglucosamine (UDP-GlcNAc). The C-terminal domain catalyzes the transfer of acetyl group from acetyl coenzyme A to glucosamine-1-phosphate (GlcN-1-P) to produce N-acetylglucosamine-1-phosphate (GlcNAc-1-P), which is converted into UDP-GlcNAc by the transfer of uridine 5-monophosphate (from uridine 5-triphosphate), a reaction catalyzed by the N-terminal domain. The chain is Bifunctional protein GlmU from Proteus mirabilis (strain HI4320).